The chain runs to 355 residues: uncharacterized protein (355 aa).

Disordered stretches follow at residues 1–121 (MPID…MELR), 226–253 (RLMN…KSSM), and 336–355 (NLHR…RKRT). Acidic residues predominate over residues 24–37 (LESESSSESDYEEV). Residues 65-87 (ETKTSSNFQNINPVQTIDNSASE) show a composition bias toward polar residues. A compositionally biased stretch (low complexity) spans 91 to 105 (DASSAEGGSNSAASS). Residues 106 to 117 (SEEEDSSDSEYE) show a composition bias toward acidic residues. Residues 226 to 245 (RLMNSEEREAQDLKDAEASR) are compositionally biased toward basic and acidic residues.

This is an uncharacterized protein from Schizosaccharomyces pombe (strain 972 / ATCC 24843) (Fission yeast).